The chain runs to 413 residues: Arginine biosynthesis bifunctional protein ArgJ (413 aa).

Positions 158, 184, 195, 285, 408, and 413 each coordinate substrate. Catalysis depends on threonine 195, which acts as the Nucleophile.

The protein belongs to the ArgJ family. As to quaternary structure, heterotetramer of two alpha and two beta chains.

The protein resides in the cytoplasm. The catalysed reaction is N(2)-acetyl-L-ornithine + L-glutamate = N-acetyl-L-glutamate + L-ornithine. It catalyses the reaction L-glutamate + acetyl-CoA = N-acetyl-L-glutamate + CoA + H(+). Its pathway is amino-acid biosynthesis; L-arginine biosynthesis; L-ornithine and N-acetyl-L-glutamate from L-glutamate and N(2)-acetyl-L-ornithine (cyclic): step 1/1. It participates in amino-acid biosynthesis; L-arginine biosynthesis; N(2)-acetyl-L-ornithine from L-glutamate: step 1/4. In terms of biological role, catalyzes two activities which are involved in the cyclic version of arginine biosynthesis: the synthesis of N-acetylglutamate from glutamate and acetyl-CoA as the acetyl donor, and of ornithine by transacetylation between N(2)-acetylornithine and glutamate. This chain is Arginine biosynthesis bifunctional protein ArgJ, found in Agrobacterium fabrum (strain C58 / ATCC 33970) (Agrobacterium tumefaciens (strain C58)).